Reading from the N-terminus, the 266-residue chain is Streptomycin 3''-kinase (266 aa).

Catalysis depends on aspartate 154, which acts as the Proton acceptor.

The protein belongs to the aminoglycoside phosphotransferase family.

The catalysed reaction is streptomycin + ATP = streptomycin 3''-phosphate + ADP + H(+). In terms of biological role, the aminoglycoside phosphotransferases achieve inactivation of their antibiotic substrates by phosphorylation. The sequence is that of Streptomycin 3''-kinase (str) from Klebsiella pneumoniae.